Consider the following 394-residue polypeptide: Phosphopentomutase (394 aa).

Mn(2+)-binding residues include D14, D287, H292, D328, H329, and H340.

Belongs to the phosphopentomutase family. Mn(2+) is required as a cofactor.

It is found in the cytoplasm. It catalyses the reaction 2-deoxy-alpha-D-ribose 1-phosphate = 2-deoxy-D-ribose 5-phosphate. It carries out the reaction alpha-D-ribose 1-phosphate = D-ribose 5-phosphate. Its pathway is carbohydrate degradation; 2-deoxy-D-ribose 1-phosphate degradation; D-glyceraldehyde 3-phosphate and acetaldehyde from 2-deoxy-alpha-D-ribose 1-phosphate: step 1/2. Its function is as follows. Isomerase that catalyzes the conversion of deoxy-ribose 1-phosphate (dRib-1-P) and ribose 1-phosphate (Rib-1-P) to deoxy-ribose 5-phosphate (dRib-5-P) and ribose 5-phosphate (Rib-5-P), respectively. The protein is Phosphopentomutase of Listeria innocua serovar 6a (strain ATCC BAA-680 / CLIP 11262).